Consider the following 886-residue polypeptide: MNIQEFKQKYNYDVATKMMQQYLDIKFAHLDCLLLFRMGDFYEMFYDDAILASNVLGIALTKRGKNGEEEIAMCGVPYHALEHYLTKLIEANYKVAICDQLETPEDAKNRGGYKAVVTRDVTRIITPGTIIEENLIASAEPNYLASLVIPQNKETASICYVDLSTSEIFVVNVPEAEILNELARLKPREILVSENLRSSNLADSIFKQLNFRITYQVDSCFAINKCKKIILDFYKMKDIKGIGEISSSQICVIGSILEYLSLTQKQNIPHLPIPRIINFHSYMTIDFSTRHNLAIVINSQGSSNGSLLNTINHTVTKQGGRLLYNFLSSPLTNIAKINHRLNITEFFYSNLEIVQRIRELLKKTSDIERCLTRITMNRSSGCDLLSIKYTLEAATIIKGVFFDAYGFNLPDFIEKIIKPLAGDAELYHLIDESIRADVPNNLNDGGIIKHEYHPKVAQLHDLINNRKLHIEKLKDQYRKETGIDSLKISHNNVIGLFIDITAKNVNKILDPKFIHRQTTVNNVRYTTTELQKLESELVNAKTLVISLEKALYADICSQVIKKAAYLRMLASSLSVLDVFCNFAYIADEYDYVKPELTDDLSFDIVKGRHPVVEKVLQRESKSFVYNDCHLSELKRIWLITGPNMAGKSTFLRQNAIIAIIAQIGSFVPAKSAKIGVVDKIFSRIGAADDLIKGQSTFMAEMLETSAILAQSTKNSLIILDEVGRGTSTYDGVSIAWSVLEYIHDKLKCRCLFATHYHELTVMNNFLPALQNYTIAIEESGKDILFLHNIISGAADRSYGIHVAALAGLPASVINRAEQILLKFEKTSTGKGKNILSTESNNLRLFNLEHNQTTIRSKLEEQFRTIDPDQLSPKAALELIYELKKLA.

641–648 (GPNMAGKS) is a binding site for ATP.

The protein belongs to the DNA mismatch repair MutS family.

Functionally, this protein is involved in the repair of mismatches in DNA. It is possible that it carries out the mismatch recognition step. This protein has a weak ATPase activity. This chain is DNA mismatch repair protein MutS, found in Rickettsia akari (strain Hartford).